The following is a 448-amino-acid chain: MKNYQQIQPYHCLKKAYEIGKHIRKIKKNYLSHRTVCFHRKRSWQSIVFYTNTGLNNCIFKIYLSLLGYRISLYFMDLCRFLRFYNPPRRDKKFLHRSRVRGYKNHSIPTDLIDGELIREINRKLTWIEVTLSDLYIWKRYFLFPSSSSDGKKINDHPLLGTKGTESIIIVHESIGLLPRSITRTISRFKAELTNQSKPLILREFGLTRYQALSSLQYIGCLISIPSIISTLFQQYFSEPWIRYWWNNEQSQIFLAPAQEDKTLEEVEGIEELSRLDQIIGNSFLGTQSQGLGDGIHEETIESVRNRNDNGIEIISHSLTDIIYLITLSGLFVAGEERLVISNSWAQELFYGLSDTMKAFFILLSTDSCIGFHSPHGWELATSFFHSGFVRDGRIISCSVSTFPVVLDTVLKYLIFRHLNRISPSIVATYHTMNELDSYRIRNKSWKI.

Transmembrane regions (helical) follow at residues 47–67, 213–233, 314–334, and 395–415; these read IVFY…LSLL, LSSL…STLF, IISH…LFVA, and IISC…KYLI.

The protein belongs to the CemA family.

It is found in the plastid membrane. The enzyme catalyses K(+)(in) + H(+)(out) = K(+)(out) + H(+)(in). Functionally, may be involved in proton extrusion. This chain is Potassium/proton antiporter CemA, found in Aneura mirabilis (Parasitic liverwort).